The primary structure comprises 520 residues: Basal body-orientation factor 1 (520 aa).

Basic residues predominate over residues 1-21; that stretch reads MPKKKGKGKGKGKGKGKGKKD. The interval 1-34 is disordered; that stretch reads MPKKKGKGKGKGKGKGKGKKDGKHDSKADRESEI. Residues 22-34 are compositionally biased toward basic and acidic residues; sequence GKHDSKADRESEI. Coiled-coil stretches lie at residues 27–175 and 245–386; these read KADR…REKM and VKEA…RQEA. A disordered region spans residues 468–492; the sequence is AHPPALSASSSEKIQVSSDAGSTVE. Residues 469–478 are compositionally biased toward low complexity; the sequence is HPPALSASSS. Polar residues predominate over residues 479 to 492; the sequence is EKIQVSSDAGSTVE.

The protein belongs to the BBOF1 family.

It localises to the cytoplasm. Its subcellular location is the cytoskeleton. It is found in the cilium basal body. Functionally, basal body protein required in multiciliate cells to align and maintain cilia orientation in response to flow. May act by mediating a maturation step that stabilizes and aligns cilia orientation. Not required to respond to planar cell polarity (PCP) or flow-based orientation cues. The protein is Basal body-orientation factor 1 of Danio rerio (Zebrafish).